Consider the following 185-residue polypeptide: Ribosome-recycling factor (185 aa).

Belongs to the RRF family.

It is found in the cytoplasm. Its function is as follows. Responsible for the release of ribosomes from messenger RNA at the termination of protein biosynthesis. May increase the efficiency of translation by recycling ribosomes from one round of translation to another. The chain is Ribosome-recycling factor from Ehrlichia ruminantium (strain Welgevonden).